Reading from the N-terminus, the 256-residue chain is Imidazole glycerol phosphate synthase subunit hisF1 (256 aa).

Catalysis depends on residues aspartate 11 and aspartate 130.

Belongs to the HisA/HisF family. In terms of assembly, heterodimer of HisH and HisF.

It localises to the cytoplasm. The catalysed reaction is 5-[(5-phospho-1-deoxy-D-ribulos-1-ylimino)methylamino]-1-(5-phospho-beta-D-ribosyl)imidazole-4-carboxamide + L-glutamine = D-erythro-1-(imidazol-4-yl)glycerol 3-phosphate + 5-amino-1-(5-phospho-beta-D-ribosyl)imidazole-4-carboxamide + L-glutamate + H(+). Its pathway is amino-acid biosynthesis; L-histidine biosynthesis; L-histidine from 5-phospho-alpha-D-ribose 1-diphosphate: step 5/9. Its function is as follows. IGPS catalyzes the conversion of PRFAR and glutamine to IGP, AICAR and glutamate. The HisF subunit catalyzes the cyclization activity that produces IGP and AICAR from PRFAR using the ammonia provided by the HisH subunit. In Parasynechococcus marenigrum (strain WH8102), this protein is Imidazole glycerol phosphate synthase subunit hisF1 (hisF1).